The primary structure comprises 228 residues: Vesicle transport protein SEC20 (228 aa).

At 1–199 (MAAPQDVHVR…LITKYNRREL (199 aa)) the chain is on the cytoplasmic side. Residues 37 to 90 (LSALTELNTKVKEKFQQLRHRIQDLEQLAKEQDKESEKQLLLQEVENHKKQMLS) adopt a coiled-coil conformation. Residues 200-220 (TDKLLIFLALALFLATVLYIV) traverse the membrane as a helical; Anchor for type IV membrane protein segment. At 221-228 (KKRLFPFL) the chain is on the lumenal side.

This sequence belongs to the SEC20 family. As to quaternary structure, component of a SNARE complex consisting of STX18, USE1L, BNIP1/SEC20L and SEC22B. Interacts directly with STX18, RINT1/TIP20L and NAPA. Interacts with ZW10 through RINT1. Interacts with BCL2. Interacts with RNF186. Interacts with RNF185. Interacts with SQSTM1; increased by 'Lys-63'-linked polyubiquitination of BNIP1. In terms of assembly, (Microbial infection) Interacts with adenovirus E1B 19K protein; plays a role in the suppression of cell apoptosis by the viral protein. Post-translationally, polyubiquitinated. 'Lys-63'-linked polyubiquitination by RNF185 increases the interaction with the autophagy receptor SQSTM1. Undergoes 'Lys-29'- and 'Lys-63'-linked polyubiquitination by RNF186 that may regulate BNIP1 localization to the mitochondrion. Isoform 1 is highly expressed in heart, brain, liver skeletal muscle and pancreas. Isoform 3 is moderately expressed in placenta, lung and kidney. Isoform 4 is highly expressed in testis and small intestine.

Its subcellular location is the endoplasmic reticulum membrane. The protein resides in the mitochondrion membrane. As part of a SNARE complex may be involved in endoplasmic reticulum membranes fusion and be required for the maintenance of endoplasmic reticulum organization. Also plays a role in apoptosis. It is for instance required for endoplasmic reticulum stress-induced apoptosis. As a substrate of RNF185 interacting with SQSTM1, might also be involved in mitochondrial autophagy. The chain is Vesicle transport protein SEC20 (BNIP1) from Homo sapiens (Human).